The chain runs to 283 residues: Non-selective voltage-gated ion channel VDAC1 (283 aa).

Alanine 2 carries the post-translational modification N-acetylalanine. Residue lysine 12 coordinates ATP. Lysine 12 is covalently cross-linked (Glycyl lysine isopeptide (Lys-Gly) (interchain with G-Cter in ubiquitin)). Position 13 is a phosphoserine (serine 13). The residue at position 19 (threonine 19) is a Phosphothreonine. Lysine 20 lines the ATP pocket. An N6-acetyllysine; alternate modification is found at lysine 20. Position 20 is an N6-succinyllysine; alternate (lysine 20). Residue lysine 20 forms a Glycyl lysine isopeptide (Lys-Gly) (interchain with G-Cter in ubiquitin); alternate linkage. Beta stranded transmembrane passes span 26–35 (LIKLDLKTKS) and 39–47 (LEFTSSGSA). Residues lysine 53 and lysine 61 each participate in a glycyl lysine isopeptide (Lys-Gly) (interchain with G-Cter in ubiquitin) cross-link. The chain crosses the membrane as a beta stranded span at residues 54-64 (VTGSLETKYRW). Tyrosine 67 bears the Phosphotyrosine mark. A run of 3 beta stranded transmembrane segments spans residues 69-76 (LTFTEKWN), 80-89 (TLGTEITVED), and 95-104 (LKLTFDSSFS). At threonine 107 the chain carries Phosphothreonine. Position 109 is an N6-acetyllysine; alternate (lysine 109). A Glycyl lysine isopeptide (Lys-Gly) (interchain with G-Cter in ubiquitin); alternate cross-link involves residue lysine 109. A Glycyl lysine isopeptide (Lys-Gly) (interchain with G-Cter in ubiquitin) cross-link involves residue lysine 110. 4 beta stranded membrane-spanning segments follow: residues 111–120 (NAKIKTGYKR), 123–130 (INLGCDMD), 137–145 (SIRGALVLG), and 150–158 (LAGYQMNFE). Residue lysine 161 forms a Glycyl lysine isopeptide (Lys-Gly) (interchain with G-Cter in ubiquitin) linkage. A run of 6 beta stranded transmembrane segments spans residues 163–175 (RVTQSNFAVGYKT), 178–185 (FQLHTNVN), 189–198 (EFGGSIYQKV), 202–211 (LETAVNLAWT), 218–227 (RFGIAAKYQI), and 231–238 (ACFSAKVN). Serine 193 is subject to Phosphoserine; by NEK1. Serine 240 carries the post-translational modification Phosphoserine. An NAD(+)-binding site is contributed by 242–244 (LIG). Residues 242–251 (LIGLGYTQTL) traverse the membrane as a beta stranded segment. Residue lysine 252 is modified to N6-acetyllysine. Residues 254-263 (GIKLTLSALL) form a beta stranded membrane-spanning segment. NAD(+) is bound at residue 260-264 (SALLD). Residue lysine 266 is modified to N6-acetyllysine; alternate. Lysine 266 participates in a covalent cross-link: Glycyl lysine isopeptide (Lys-Gly) (interchain with G-Cter in ubiquitin); alternate. A beta stranded membrane pass occupies residues 273 to 282 (HKLGLGLEFQ). A Glycyl lysine isopeptide (Lys-Gly) (interchain with G-Cter in ubiquitin) cross-link involves residue lysine 274.

It belongs to the eukaryotic mitochondrial porin family. In terms of assembly, homodimer and homotrimer; in response to cyclic AMP or calcium; oligomerization is required for scramblase activity. Component of the mitochondrial permeability transition pore complex (mPTPC), at least composed of SPG7, VDAC1 and PPIF. Interacts with SPG7, NIPSNAP2 and SLC25A30. Interacts with hexokinases including HK1. The HK1-VDAC1 complex interacts with ATF2. Interacts with BCL2L1. Interacts with BAK1. Interacts with RTL10/BOP (via BH3 domain). Interacts with amyloid-beta and APP; induces VDAC1 dephosphorylation. Interacts with TMEM41B. Interacts with BCAP31. Interacts with HSPA9; this interaction couples ITPR1 to VDAC1. (Microbial infection) Interacts with influenza A virus PB1-F2 protein. In terms of processing, phosphorylation at Ser-193 by NEK1 promotes the closed conformational state preventing excessive mitochondrial membrane permeability and subsequent apoptotic cell death after injury. Phosphorylation by the AKT-GSK3B axis stabilizes the protein probably by preventing ubiquitin-mediated proteasomal degradation. Post-translationally, ubiquitinated. Undergoes monoubiquitination and polyubiquitination by PRKN; monoubiquitination at Lys-274 inhibits apoptosis, whereas polyubiquitination leads to its degradation and promotes mitophagy. Deubiquitinated by USP30. In terms of tissue distribution, expressed in erythrocytes (at protein level). Expressed in heart, liver and skeletal muscle.

The protein resides in the mitochondrion outer membrane. It is found in the cell membrane. The protein localises to the membrane raft. The catalysed reaction is chloride(in) = chloride(out). The enzyme catalyses K(+)(in) = K(+)(out). It carries out the reaction ATP(in) = ATP(out). It catalyses the reaction Ca(2+)(in) = Ca(2+)(out). The catalysed reaction is Na(+)(in) = Na(+)(out). The enzyme catalyses Mg(2+)(in) = Mg(2+)(out). It carries out the reaction L-glutamate(out) = L-glutamate(in). It catalyses the reaction dopamine(out) = dopamine(in). The catalysed reaction is acetylcholine(in) = acetylcholine(out). The enzyme catalyses Fe(III)-[cytochrome c](out) = Fe(III)-[cytochrome c](in). It carries out the reaction a 1,2-diacyl-sn-glycero-3-phosphocholine(in) = a 1,2-diacyl-sn-glycero-3-phosphocholine(out). It catalyses the reaction a 1,2-diacyl-sn-glycero-3-phospho-L-serine(in) = a 1,2-diacyl-sn-glycero-3-phospho-L-serine(out). Its activity is regulated as follows. Inhibited by nitric oxide. Non-selective voltage-gated ion channel that mediates the transport of anions and cations through the mitochondrion outer membrane and plasma membrane. The channel at the outer mitochondrial membrane allows diffusion of small hydrophilic molecules; in the plasma membrane it is involved in cell volume regulation and apoptosis. It adopts an open conformation at low or zero membrane potential and a closed conformation at potentials above 30-40 mV. The open state has a weak anion selectivity whereas the closed state is cation-selective. Binds various signaling molecules, including the sphingolipid ceramide, the phospholipid phosphatidylcholine, and the sterols cholesterol and oxysterol. In depolarized mitochondria, acts downstream of PRKN and PINK1 to promote mitophagy or prevent apoptosis; polyubiquitination by PRKN promotes mitophagy, while monoubiquitination by PRKN decreases mitochondrial calcium influx which ultimately inhibits apoptosis. May participate in the formation of the permeability transition pore complex (PTPC) responsible for the release of mitochondrial products that triggers apoptosis. May mediate ATP export from cells. Part of a complex composed of HSPA9, ITPR1 and VDAC1 that regulates mitochondrial calcium-dependent apoptosis by facilitating calcium transport from the ER lumen to the mitochondria intermembrane space thus providing calcium for the downstream calcium channel MCU that directly releases it into mitochondria matrix. Mediates cytochrome c efflux. In terms of biological role, catalyzes the scrambling of phospholipids across the outer mitochondrial membrane; the mechanism is unrelated to channel activity and is capable of translocating both anionic and zwitterionic phospholipids. This Homo sapiens (Human) protein is Non-selective voltage-gated ion channel VDAC1.